The following is a 106-amino-acid chain: Cell division protein FtsB (106 aa).

Topologically, residues 1 to 3 (MGK) are cytoplasmic. The helical transmembrane segment at 4–21 (LTLLLLVLLGWLQYSLWL) threads the bilayer. Topologically, residues 22-106 (GKNGIHDFVR…GTPSTQNNAQ (85 aa)) are periplasmic. The stretch at 31-62 (RVKEDVAAQEANNSTLKARNDQLFAEIDDLNG) forms a coiled coil.

It belongs to the FtsB family. As to quaternary structure, part of a complex composed of FtsB, FtsL and FtsQ.

It is found in the cell inner membrane. Functionally, essential cell division protein. May link together the upstream cell division proteins, which are predominantly cytoplasmic, with the downstream cell division proteins, which are predominantly periplasmic. This is Cell division protein FtsB from Yersinia pseudotuberculosis serotype O:1b (strain IP 31758).